Consider the following 381-residue polypeptide: Glycerol-3-phosphate dehydrogenase [NAD(+)] (381 aa).

The interval 1-27 is disordered; the sequence is MTAMDRLDHVSNQLAAKRQKKNPEGKP. Residues 34–39, Phe66, and Phe122 each bind NAD(+); that span reads GSGNWG. Lys145 is a binding site for substrate. Ala178 serves as a coordination point for NAD(+). Lys238 serves as the catalytic Proton acceptor. NAD(+) contacts are provided by Arg303 and Gln332. 303-304 is a binding site for substrate; sequence RN.

This sequence belongs to the NAD-dependent glycerol-3-phosphate dehydrogenase family.

It carries out the reaction sn-glycerol 3-phosphate + NAD(+) = dihydroxyacetone phosphate + NADH + H(+). This Pichia angusta (Yeast) protein is Glycerol-3-phosphate dehydrogenase [NAD(+)] (GPD).